A 241-amino-acid polypeptide reads, in one-letter code: Uridylate kinase (241 aa).

Residue 15 to 18 (KLSG) participates in ATP binding. G57 contributes to the UMP binding site. Residues G58 and R62 each coordinate ATP. UMP is bound by residues D77 and 139-146 (IGHTLFTT). 4 residues coordinate ATP: T166, N167, F172, and D175.

It belongs to the UMP kinase family. In terms of assembly, homohexamer.

Its subcellular location is the cytoplasm. The enzyme catalyses UMP + ATP = UDP + ADP. It participates in pyrimidine metabolism; CTP biosynthesis via de novo pathway; UDP from UMP (UMPK route): step 1/1. Its activity is regulated as follows. Inhibited by UTP. Catalyzes the reversible phosphorylation of UMP to UDP. The sequence is that of Uridylate kinase from Wigglesworthia glossinidia brevipalpis.